The primary structure comprises 348 residues: Phosphate acyltransferase (348 aa).

Belongs to the PlsX family. As to quaternary structure, homodimer. Probably interacts with PlsY.

Its subcellular location is the cytoplasm. It catalyses the reaction a fatty acyl-[ACP] + phosphate = an acyl phosphate + holo-[ACP]. Its pathway is lipid metabolism; phospholipid metabolism. Catalyzes the reversible formation of acyl-phosphate (acyl-PO(4)) from acyl-[acyl-carrier-protein] (acyl-ACP). This enzyme utilizes acyl-ACP as fatty acyl donor, but not acyl-CoA. The polypeptide is Phosphate acyltransferase (Francisella philomiragia subsp. philomiragia (strain ATCC 25017 / CCUG 19701 / FSC 153 / O#319-036)).